Reading from the N-terminus, the 155-residue chain is Protein-export protein SecB (155 aa).

This sequence belongs to the SecB family. Homotetramer, a dimer of dimers. One homotetramer interacts with 1 SecA dimer.

It is found in the cytoplasm. In terms of biological role, one of the proteins required for the normal export of preproteins out of the cell cytoplasm. It is a molecular chaperone that binds to a subset of precursor proteins, maintaining them in a translocation-competent state. It also specifically binds to its receptor SecA. The protein is Protein-export protein SecB of Methylococcus capsulatus (strain ATCC 33009 / NCIMB 11132 / Bath).